The chain runs to 483 residues: Probable L-xylulose kinase (483 aa).

Belongs to the FGGY kinase family. As to quaternary structure, homodimer.

It catalyses the reaction L-xylulose + ATP = L-xylulose 5-phosphate + ADP + H(+). The chain is Probable L-xylulose kinase (lyx) from Pasteurella multocida (strain Pm70).